The primary structure comprises 346 residues: MNNLKWVAYFLKSRMNWIFWILFLNLLMLGISLIDYDFPIDSLFYIVSLNLSLTMIFLILTYFKEVKLYKHFDKDKEIEEIKHKDFAETPFQRHTVDYLYRQISAHKEKVVEQQLQLNMHEQTITEFVHDIKTPVTAMKLLIDQEKNQERKQALLYEWSRINSMLDTQLYITRLESQRKDMYFDYVSLKRMVIDEIQLTRHISQVKGIGFDVDFKVDDYVYTDIKWCRMIIRQILSNALKYSENFNIEIGTELNDQHVSLYIKDYGRGISKKDMPRIFERGFTSTANRNETTSSGMGLYLVNSVKDQLGIHLQVTSTVGKGTTVRLIFPLQNEIVERMSEVTNLSF.

Transmembrane regions (helical) follow at residues 15-35 (MNWI…SLID) and 43-63 (LFYI…LTYF). One can recognise a Histidine kinase domain in the interval 126 to 332 (EFVHDIKTPV…TVRLIFPLQN (207 aa)).

Interacts with GraX.

The protein resides in the cell membrane. It carries out the reaction ATP + protein L-histidine = ADP + protein N-phospho-L-histidine.. Its function is as follows. Member of the two-component regulatory system GraR/GraS involved in resistance against cationic antimicrobial peptides (CAMPs). Functions as a sensor protein kinase which phosphorylates GraR through the auxiliary protein GraX. In turn, GraR up-regulates many genes such as adhesins, exoproteins, transporters, toxins, and proteins involved in cell wall synthesis. Down-regulates the expression of many genes involved in RNA and amino acid synthesis or glycolysis. This is Sensor protein kinase GraS (graS) from Staphylococcus aureus (strain bovine RF122 / ET3-1).